The sequence spans 902 residues: 26S proteasome regulatory subunit rpn-1 (902 aa).

A compositionally biased stretch (basic and acidic residues) spans 1-41; that stretch reads MAQESDLSKTADKGKGKAVDDEKKHQDVDGKTPANGKKEEE. The tract at residues 1 to 54 is disordered; the sequence is MAQESDLSKTADKGKGKAVDDEKKHQDVDGKTPANGKKEEEQNASEELSEEDQQ. The span at 42 to 52 shows a compositional bias: acidic residues; the sequence is QNASEELSEED. PC repeat units lie at residues 415 to 448, 449 to 487, 488 to 522, 525 to 559, 568 to 601, 645 to 680, 681 to 715, and 716 to 750; these read STVASLGTLLLWDVENGLDHVDKYTYLEEEQIQA, GAYLAIGIMNTNVRTDSEPAMALLADPDKLAHKNPLIRV, ATIMGLGLAYAGSCKEELLSFLVNIISDPEESMQV, MAALACGMIFVGSSNSEVSEAIVTTLLDEESGSRL, ALGLGLLYFGRQEQVDVILETLKAVEHPMAKPTA, AVLGIGLIAMGEDVGQEMVLRHFGHLMHYGEANIRR, AVPLAMGLISPSNPQMKVYDTLSRYSHDNDNEVAI, and NAIFAMGLLGAGTNNARLAQLLRQLASYYHRDQES.

It belongs to the proteasome subunit S2 family.

Its function is as follows. Acts as a regulatory subunit of the 26 proteasome which is involved in the ATP-dependent degradation of ubiquitinated proteins. The chain is 26S proteasome regulatory subunit rpn-1 (rpn-1) from Neurospora crassa (strain ATCC 24698 / 74-OR23-1A / CBS 708.71 / DSM 1257 / FGSC 987).